We begin with the raw amino-acid sequence, 195 residues long: Granulocyte colony-stimulating factor (195 aa).

The N-terminal stretch at 1 to 21 is a signal peptide; sequence MKLMALQLLLWHIALWMVPEA. Disulfide bonds link Cys-57/Cys-63 and Cys-85/Cys-95. A glycan (O-linked (GalNAc...) threonine) is linked at Thr-154.

This sequence belongs to the IL-6 superfamily. In terms of assembly, monomer. O-glycosylated.

The protein resides in the secreted. Its function is as follows. Granulocyte/macrophage colony-stimulating factors are cytokines that act in hematopoiesis by controlling the production, differentiation, and function of 2 related white cell populations of the blood, the granulocytes and the monocytes-macrophages. This CSF induces granulocytes. This Sus scrofa (Pig) protein is Granulocyte colony-stimulating factor (CSF3).